The primary structure comprises 215 residues: Probable GTP-binding protein EngB (215 aa).

The 175-residue stretch at E26–P200 folds into the EngB-type G domain. GTP-binding positions include G34–S41, G61–L65, D79–G82, T146–D149, and F179–S181. Mg(2+) contacts are provided by S41 and T63.

Belongs to the TRAFAC class TrmE-Era-EngA-EngB-Septin-like GTPase superfamily. EngB GTPase family. Requires Mg(2+) as cofactor.

In terms of biological role, necessary for normal cell division and for the maintenance of normal septation. The protein is Probable GTP-binding protein EngB of Aliivibrio fischeri (strain ATCC 700601 / ES114) (Vibrio fischeri).